We begin with the raw amino-acid sequence, 203 residues long: CASP-like protein 5A2 (203 aa).

The Cytoplasmic portion of the chain corresponds to 1 to 63 (MRASRPVVHP…KDPPGAPGTP (63 aa)). Positions 39–58 (AAHGGENAQPRGVRMKDPPG) are disordered. A helical transmembrane segment spans residues 64–84 (GGLGLRLVQAFFAAAALAVMA). The Extracellular segment spans residues 85-94 (STDDFPSVSA). The chain crosses the membrane as a helical span at residues 95-115 (FCYLVAAAILQCLWSLSLAVV). Over 116 to 139 (DIYALLVKRSLRNPQAVCIFTIGD) the chain is Cytoplasmic. The chain crosses the membrane as a helical span at residues 140–160 (GITGTLTLGAACASAGITVLI). The Extracellular portion of the chain corresponds to 161–177 (GNDLNICANNHCASFET). A helical membrane pass occupies residues 178-198 (ATAMAFISWFALAPSCVLNFW). The Cytoplasmic portion of the chain corresponds to 199–203 (SMASR).

Belongs to the Casparian strip membrane proteins (CASP) family. In terms of assembly, homodimer and heterodimers.

Its subcellular location is the cell membrane. The sequence is that of CASP-like protein 5A2 from Oryza sativa subsp. indica (Rice).